Reading from the N-terminus, the 545-residue chain is Chaperonin GroEL (545 aa).

ATP is bound by residues T30–P33, K51, D87–T91, G415, and D496.

This sequence belongs to the chaperonin (HSP60) family. In terms of assembly, forms a cylinder of 14 subunits composed of two heptameric rings stacked back-to-back. Interacts with the co-chaperonin GroES.

The protein resides in the cytoplasm. The catalysed reaction is ATP + H2O + a folded polypeptide = ADP + phosphate + an unfolded polypeptide.. Its function is as follows. Together with its co-chaperonin GroES, plays an essential role in assisting protein folding. The GroEL-GroES system forms a nano-cage that allows encapsulation of the non-native substrate proteins and provides a physical environment optimized to promote and accelerate protein folding. This Rhodobacter capsulatus (Rhodopseudomonas capsulata) protein is Chaperonin GroEL.